Here is a 316-residue protein sequence, read N- to C-terminus: Ribosomal RNA small subunit methyltransferase H (316 aa).

S-adenosyl-L-methionine contacts are provided by residues 35–37 (SGH), aspartate 55, phenylalanine 84, aspartate 105, and glutamine 112.

This sequence belongs to the methyltransferase superfamily. RsmH family.

It is found in the cytoplasm. The catalysed reaction is cytidine(1402) in 16S rRNA + S-adenosyl-L-methionine = N(4)-methylcytidine(1402) in 16S rRNA + S-adenosyl-L-homocysteine + H(+). Its function is as follows. Specifically methylates the N4 position of cytidine in position 1402 (C1402) of 16S rRNA. This is Ribosomal RNA small subunit methyltransferase H from Streptococcus equi subsp. zooepidemicus (strain H70).